Consider the following 21-residue polypeptide: Peptide PGLa-R5 (21 aa).

Leucine amide is present on Leu-21.

In terms of tissue distribution, expressed by the skin glands.

The protein localises to the secreted. Its function is as follows. Antimicrobial peptide. This Xenopus ruwenzoriensis (Uganda clawed frog) protein is Peptide PGLa-R5.